Here is a 734-residue protein sequence, read N- to C-terminus: Predicted GPI-anchored protein 49 (734 aa).

An N-terminal signal peptide occupies residues 1 to 16; the sequence is MNYITSLLLLSSNTFL. 4 N-linked (GlcNAc...) asparagine glycosylation sites follow: N27, N56, N68, and N71. The disordered stretch occupies residues 78 to 145; sequence DNSDTDIDDS…NESDTQNEND (68 aa). The segment covering 87–98 has biased composition (low complexity); it reads SSSNSEDVSSND. 4 N-linked (GlcNAc...) asparagine glycosylation sites follow: N105, N118, N136, and N180. Residues 110–129 are compositionally biased toward acidic residues; it reads FSDESDEGNDSDDNGDEVEN. The span at 130-141 shows a compositional bias: polar residues; sequence MENNQANESDTQ. Disordered regions lie at residues 216–262 and 331–360; these read SPKS…LKSK and DANP…RLPT. Residues 228-259 are compositionally biased toward basic residues; sequence SRKKTLKSKSKSKSSKLKHKSRKSHKRRPKLL. N388 and N427 each carry an N-linked (GlcNAc...) asparagine glycan. Positions 447-479 are disordered; that stretch reads PPRYSNHHSEFTVERPPRPSRTKKRPRIKAKKT. The segment covering 453-463 has biased composition (basic and acidic residues); it reads HHSEFTVERPP. A compositionally biased stretch (basic residues) spans 464-479; that stretch reads RPSRTKKRPRIKAKKT. Residue N517 is glycosylated (N-linked (GlcNAc...) asparagine). The segment at 582–653 is disordered; sequence KPQETKLHSP…STTSTKPNDQ (72 aa). Residues 592-611 are compositionally biased toward low complexity; that stretch reads TSTDTKSSKLMSSSSSNNNK. Positions 620-631 are enriched in polar residues; that stretch reads EYNQTQESTSYN. Residues N622 and N631 are each glycosylated (N-linked (GlcNAc...) asparagine). Residues 632–650 show a composition bias toward low complexity; that stretch reads TTKAVPKTSVVSSTTSTKP. S707 is lipidated: GPI-anchor amidated serine. Positions 708-734 are cleaved as a propeptide — removed in mature form; it reads ASQNLSFSVLGLIILLLLLPGLLIIIM. N711 carries N-linked (GlcNAc...) asparagine glycosylation.

The protein resides in the cell membrane. The sequence is that of Predicted GPI-anchored protein 49 (PGA49) from Candida albicans (strain SC5314 / ATCC MYA-2876) (Yeast).